The sequence spans 199 residues: Imidazoleglycerol-phosphate dehydratase (199 aa).

The protein belongs to the imidazoleglycerol-phosphate dehydratase family.

It localises to the cytoplasm. The enzyme catalyses D-erythro-1-(imidazol-4-yl)glycerol 3-phosphate = 3-(imidazol-4-yl)-2-oxopropyl phosphate + H2O. It functions in the pathway amino-acid biosynthesis; L-histidine biosynthesis; L-histidine from 5-phospho-alpha-D-ribose 1-diphosphate: step 6/9. The sequence is that of Imidazoleglycerol-phosphate dehydratase from Mesorhizobium japonicum (strain LMG 29417 / CECT 9101 / MAFF 303099) (Mesorhizobium loti (strain MAFF 303099)).